The chain runs to 257 residues: DNA repair protein RecO (257 aa).

It belongs to the RecO family.

Involved in DNA repair and RecF pathway recombination. The polypeptide is DNA repair protein RecO (Variovorax paradoxus (strain S110)).